A 305-amino-acid chain; its full sequence is N-acetylglucosamine-1-phosphotransferase subunit gamma (305 aa).

A signal peptide spans 1-24 (MAAGLARLLLLLGLSAGGPAPAGA). One can recognise an MRH domain in the interval 69–171 (GKCFSLVEST…TFETPLVCHP (103 aa)). C71 and C84 are oxidised to a cystine. N-linked (GlcNAc...) asparagine glycosylation is found at N88 and N115. 2 disulfide bridges follow: C129–C157 and C142–C169. In terms of domain architecture, DMAP1-binding spans 176–279 (VYPTLPEALQ…YTRPTETSNL (104 aa)). Residues 267–305 (GIPYTRPTETSNLEHLGHETPRAKSPEQLRGDPGLRGSL) form a disordered region. A compositionally biased stretch (basic and acidic residues) spans 281 to 296 (HLGHETPRAKSPEQLR).

In terms of assembly, homodimer; disulfide-linked. Hexamer of two alpha (GNPTAB), two beta (GNPTAB) and two gamma (GNPTG) subunits; disulfide-linked. The alpha and/or the beta subunits of the enzyme constitute the catalytic subunits. In terms of processing, cys-245 mediates the formation of the interchain disulfide bond for formation of the homodimer. Cys-142, Cys-157 and Cys-169 are involved in intramolecular disulfide bonds formation. As to expression, widely expressed.

It localises to the secreted. Its subcellular location is the golgi apparatus. Functionally, non-catalytic subunit of the N-acetylglucosamine-1-phosphotransferase complex, an enzyme that catalyzes the formation of mannose 6-phosphate (M6P) markers on high mannose type oligosaccharides in the Golgi apparatus. Binds and presents the high mannose glycans of the acceptor to the catalytic alpha and beta subunits (GNPTAB). Enhances the rate of N-acetylglucosamine-1-phosphate transfer to the oligosaccharides of acid hydrolase acceptors. The sequence is that of N-acetylglucosamine-1-phosphotransferase subunit gamma (GNPTG) from Homo sapiens (Human).